The sequence spans 510 residues: 2,3-bisphosphoglycerate-independent phosphoglycerate mutase (510 aa).

2 residues coordinate Mn(2+): aspartate 12 and serine 62. Serine 62 serves as the catalytic Phosphoserine intermediate. Residues histidine 123, 153–154 (RD), arginine 185, arginine 191, 260–263 (RPDR), and lysine 333 contribute to the substrate site. Aspartate 400, histidine 404, aspartate 441, histidine 442, and histidine 460 together coordinate Mn(2+).

The protein belongs to the BPG-independent phosphoglycerate mutase family. Monomer. Requires Mn(2+) as cofactor.

The enzyme catalyses (2R)-2-phosphoglycerate = (2R)-3-phosphoglycerate. The protein operates within carbohydrate degradation; glycolysis; pyruvate from D-glyceraldehyde 3-phosphate: step 3/5. Catalyzes the interconversion of 2-phosphoglycerate and 3-phosphoglycerate. The protein is 2,3-bisphosphoglycerate-independent phosphoglycerate mutase of Clostridium acetobutylicum (strain ATCC 824 / DSM 792 / JCM 1419 / IAM 19013 / LMG 5710 / NBRC 13948 / NRRL B-527 / VKM B-1787 / 2291 / W).